A 210-amino-acid polypeptide reads, in one-letter code: ATP phosphoribosyltransferase (210 aa).

It belongs to the ATP phosphoribosyltransferase family. Short subfamily. Heteromultimer composed of HisG and HisZ subunits.

It is found in the cytoplasm. The catalysed reaction is 1-(5-phospho-beta-D-ribosyl)-ATP + diphosphate = 5-phospho-alpha-D-ribose 1-diphosphate + ATP. It functions in the pathway amino-acid biosynthesis; L-histidine biosynthesis; L-histidine from 5-phospho-alpha-D-ribose 1-diphosphate: step 1/9. In terms of biological role, catalyzes the condensation of ATP and 5-phosphoribose 1-diphosphate to form N'-(5'-phosphoribosyl)-ATP (PR-ATP). Has a crucial role in the pathway because the rate of histidine biosynthesis seems to be controlled primarily by regulation of HisG enzymatic activity. This is ATP phosphoribosyltransferase from Picosynechococcus sp. (strain ATCC 27264 / PCC 7002 / PR-6) (Agmenellum quadruplicatum).